The following is a 223-amino-acid chain: CKLF-like MARVEL transmembrane domain-containing protein 5 (223 aa).

In terms of domain architecture, MARVEL spans 29 to 213 (FLTSHKGILL…DAFKIYRTEM (185 aa)). 4 helical membrane passes run 35–55 (GILL…FTAS), 56–76 (ISAY…FLFL), 162–182 (FLRC…AVTS), and 186–206 (AAIA…YDAF).

It belongs to the chemokine-like factor family. In terms of tissue distribution, highly expressed in the brain.

It is found in the membrane. In Homo sapiens (Human), this protein is CKLF-like MARVEL transmembrane domain-containing protein 5 (CMTM5).